Consider the following 389-residue polypeptide: Succinate--CoA ligase [ADP-forming] subunit beta (389 aa).

One can recognise an ATP-grasp domain in the interval 9 to 244 (KQILRKYGIP…PSQMSNNEAR (236 aa)). ATP is bound by residues lysine 46, 53 to 55 (GRG), isoleucine 102, and glutamate 107. Mg(2+)-binding residues include asparagine 199 and aspartate 213. Substrate contacts are provided by residues asparagine 264 and 321-323 (GIM).

This sequence belongs to the succinate/malate CoA ligase beta subunit family. In terms of assembly, heterotetramer of two alpha and two beta subunits. Mg(2+) serves as cofactor.

The enzyme catalyses succinate + ATP + CoA = succinyl-CoA + ADP + phosphate. It carries out the reaction GTP + succinate + CoA = succinyl-CoA + GDP + phosphate. Its pathway is carbohydrate metabolism; tricarboxylic acid cycle; succinate from succinyl-CoA (ligase route): step 1/1. Succinyl-CoA synthetase functions in the citric acid cycle (TCA), coupling the hydrolysis of succinyl-CoA to the synthesis of either ATP or GTP and thus represents the only step of substrate-level phosphorylation in the TCA. The beta subunit provides nucleotide specificity of the enzyme and binds the substrate succinate, while the binding sites for coenzyme A and phosphate are found in the alpha subunit. The protein is Succinate--CoA ligase [ADP-forming] subunit beta of Protochlamydia amoebophila (strain UWE25).